An 889-amino-acid chain; its full sequence is DNA gyrase subunit A (889 aa).

The Topo IIA-type catalytic domain maps to 35–501 (LPDVRDGLKP…GFEDLEDEDL (467 aa)). Residue tyrosine 123 is the O-(5'-phospho-DNA)-tyrosine intermediate of the active site. The short motif at 528 to 534 (QNRGGRG) is the GyrA-box element. Residues 811–889 (KEDAEDETNE…IQQSSDEDEE (79 aa)) form a disordered region. The segment covering 813 to 823 (DAEDETNEDEQ) has biased composition (acidic residues). The segment covering 863–875 (DGRIEVRQDFMDR) has biased composition (basic and acidic residues). The segment covering 876-889 (VEEDIQQSSDEDEE) has biased composition (acidic residues).

It belongs to the type II topoisomerase GyrA/ParC subunit family. In terms of assembly, heterotetramer, composed of two GyrA and two GyrB chains. In the heterotetramer, GyrA contains the active site tyrosine that forms a transient covalent intermediate with DNA, while GyrB binds cofactors and catalyzes ATP hydrolysis.

It localises to the cytoplasm. It catalyses the reaction ATP-dependent breakage, passage and rejoining of double-stranded DNA.. In terms of biological role, a type II topoisomerase that negatively supercoils closed circular double-stranded (ds) DNA in an ATP-dependent manner to modulate DNA topology and maintain chromosomes in an underwound state. Negative supercoiling favors strand separation, and DNA replication, transcription, recombination and repair, all of which involve strand separation. Also able to catalyze the interconversion of other topological isomers of dsDNA rings, including catenanes and knotted rings. Type II topoisomerases break and join 2 DNA strands simultaneously in an ATP-dependent manner. This Staphylococcus aureus (strain Mu50 / ATCC 700699) protein is DNA gyrase subunit A.